Consider the following 247-residue polypeptide: UPF0280 protein Mevan_0550 (247 aa).

The protein belongs to the UPF0280 family.

This Methanococcus vannielii (strain ATCC 35089 / DSM 1224 / JCM 13029 / OCM 148 / SB) protein is UPF0280 protein Mevan_0550.